Reading from the N-terminus, the 55-residue chain is MFGELGVPEVLFILGIALLIFGPKKLGDLGKGLGEGVRGFKSALRDEPKKEETKA.

Residues 1-21 (MFGELGVPEVLFILGIALLIF) traverse the membrane as a helical segment.

Belongs to the TatA/E family. Forms a complex with TatC.

Its subcellular location is the cell inner membrane. Its function is as follows. Part of the twin-arginine translocation (Tat) system that transports large folded proteins containing a characteristic twin-arginine motif in their signal peptide across membranes. TatA could form the protein-conducting channel of the Tat system. The sequence is that of Sec-independent protein translocase protein TatA from Koribacter versatilis (strain Ellin345).